A 1457-amino-acid polypeptide reads, in one-letter code: Receptor-type tyrosine-protein phosphatase kappa (1457 aa).

A signal peptide spans 1–25; that stretch reads MDVAAAALPAFVALWLLYPWPLLGS. At 26–752 the chain is on the extracellular side; that stretch reads ALGQFSAGGC…PAKQTDRVVK (727 aa). Positions 30-193 constitute an MAM domain; it reads FSAGGCTFDD…IQVLSYPCDK (164 aa). Residues N100, N139, and N210 are each glycosylated (N-linked (GlcNAc...) asparagine). The 86-residue stretch at 195–280 folds into the Ig-like C2-type domain; it reads PHFLRLGDVE…TQSERGSGVS (86 aa). A disulfide bond links C215 and C269. Fibronectin type-III domains follow at residues 293 to 388, 391 to 487, 490 to 594, and 595 to 688; these read PIAP…CAEP, TPKT…TDED, GPVP…SAPS, and LPDY…TVGD. N-linked (GlcNAc...) asparagine glycans are attached at residues N415, N423, N435, N461, N551, N585, N589, N606, and N689. Residues 753 to 774 form a helical membrane-spanning segment; sequence IAGISAGILVFILLLLVVIVIV. Residues 775 to 1457 lie on the Cytoplasmic side of the membrane; sequence KKSKLAKKRK…DVALEYLESS (683 aa). The residue at position 868 (S868) is a Phosphoserine. Tyrosine-protein phosphatase domains follow at residues 899–1159 and 1191–1453; these read FKEE…ILEA and LKDE…ALEY. Residues D1068, 1100-1106, and Q1144 contribute to the substrate site; that span reads CSAGAGR. C1100 serves as the catalytic Phosphocysteine intermediate. The active-site Phosphocysteine intermediate is C1394.

It belongs to the protein-tyrosine phosphatase family. Receptor class 2B subfamily. This protein undergoes proteolytic processing. As to expression, high levels in liver and kidney. Lower levels in lung, brain and heart. Not seen in spleen and testis.

Its subcellular location is the membrane. It catalyses the reaction O-phospho-L-tyrosyl-[protein] + H2O = L-tyrosyl-[protein] + phosphate. Its function is as follows. Regulation of processes involving cell contact and adhesion such as growth control, tumor invasion, and metastasis. Negative regulator of EGFR signaling pathway. Forms complexes with beta-catenin and gamma-catenin/plakoglobin. Beta-catenin may be a substrate for the catalytic activity of PTPRK/PTP-kappa. In Mus musculus (Mouse), this protein is Receptor-type tyrosine-protein phosphatase kappa (Ptprk).